Reading from the N-terminus, the 213-residue chain is Orotate phosphoribosyltransferase (213 aa).

5-phospho-alpha-D-ribose 1-diphosphate is bound at residue lysine 26. 34-35 is an orotate binding site; it reads FF. Residues 72–73, arginine 98, lysine 99, lysine 102, and 123–131 each bind 5-phospho-alpha-D-ribose 1-diphosphate; these read YK and DDVISAGTS. Residues serine 127 and arginine 155 each coordinate orotate.

It belongs to the purine/pyrimidine phosphoribosyltransferase family. PyrE subfamily. In terms of assembly, homodimer. The cofactor is Mg(2+).

The enzyme catalyses orotidine 5'-phosphate + diphosphate = orotate + 5-phospho-alpha-D-ribose 1-diphosphate. The protein operates within pyrimidine metabolism; UMP biosynthesis via de novo pathway; UMP from orotate: step 1/2. Functionally, catalyzes the transfer of a ribosyl phosphate group from 5-phosphoribose 1-diphosphate to orotate, leading to the formation of orotidine monophosphate (OMP). The sequence is that of Orotate phosphoribosyltransferase from Neisseria gonorrhoeae (strain ATCC 700825 / FA 1090).